Here is a 200-residue protein sequence, read N- to C-terminus: Large ribosomal subunit protein uL4c (200 aa).

Residues 45–71 (RAEIRGGGRKPWKQKGTGRARAGSRRS) form a disordered region. The segment covering 51-68 (GGRKPWKQKGTGRARAGS) has biased composition (basic residues).

It belongs to the universal ribosomal protein uL4 family. In terms of assembly, part of the 50S ribosomal subunit.

The protein resides in the plastid. It is found in the chloroplast. In terms of biological role, probably binds the 23S rRNA. This Cyanidioschyzon merolae (strain NIES-3377 / 10D) (Unicellular red alga) protein is Large ribosomal subunit protein uL4c (rpl4).